We begin with the raw amino-acid sequence, 308 residues long: MKDDINQEITFRKLSVFMMFMAKGNIARTAEAMKLSSVSVHRALHTLEEGVGCPLFVHKGRNLLPLQAAWTLLEYCQDVISLMNRGLEATRKVAGVGQGRLRIGTLYSLTLETVPRIIMGMKLRRPELELDLTMGSNQMLLDMLEDDALDAILIATNEGEFNNTAFDVVPLFEDDIFLAAPATERLDASRLADLRDYADRKFVSLAEGFATYAGFREAFHIAGFEPEIVTRVNDIFSMISLVQAGVGFALLPGRMKKVYEKDVQLLKLAEPYQMRQLISIVYSHHRERDADLLALAAEGRMYARSINR.

Residues 9 to 66 (ITFRKLSVFMMFMAKGNIARTAEAMKLSSVSVHRALHTLEEGVGCPLFVHKGRNLLPL) form the HTH lysR-type domain. The H-T-H motif DNA-binding region spans 26 to 45 (IARTAEAMKLSSVSVHRALH).

The protein belongs to the LysR transcriptional regulatory family.

Functionally, transcriptional regulator of the mau genes for malonate utilization. In Klebsiella pneumoniae, this protein is Malonate utilization transcriptional regulator (mauR).